The chain runs to 270 residues: tRNA pseudouridine synthase A (270 aa).

The active-site Nucleophile is Asp-51. Tyr-109 provides a ligand contact to substrate.

This sequence belongs to the tRNA pseudouridine synthase TruA family. In terms of assembly, homodimer.

It carries out the reaction uridine(38/39/40) in tRNA = pseudouridine(38/39/40) in tRNA. Its function is as follows. Formation of pseudouridine at positions 38, 39 and 40 in the anticodon stem and loop of transfer RNAs. The polypeptide is tRNA pseudouridine synthase A (Burkholderia mallei (strain ATCC 23344)).